We begin with the raw amino-acid sequence, 430 residues long: Enolase (430 aa).

Position 163 (glutamine 163) interacts with (2R)-2-phosphoglycerate. The active-site Proton donor is the glutamate 205. Mg(2+) contacts are provided by aspartate 242, glutamate 287, and aspartate 314. 4 residues coordinate (2R)-2-phosphoglycerate: lysine 339, arginine 368, serine 369, and lysine 390. The active-site Proton acceptor is lysine 339.

This sequence belongs to the enolase family. Mg(2+) serves as cofactor.

The protein localises to the cytoplasm. It is found in the secreted. Its subcellular location is the cell surface. The enzyme catalyses (2R)-2-phosphoglycerate = phosphoenolpyruvate + H2O. Its pathway is carbohydrate degradation; glycolysis; pyruvate from D-glyceraldehyde 3-phosphate: step 4/5. In terms of biological role, catalyzes the reversible conversion of 2-phosphoglycerate (2-PG) into phosphoenolpyruvate (PEP). It is essential for the degradation of carbohydrates via glycolysis. The sequence is that of Enolase from Geobacillus sp. (strain WCH70).